The primary structure comprises 820 residues: Phenylalanine--tRNA ligase beta subunit (820 aa).

The region spanning 42-154 (KGGLEGLVIG…EDAVPGTLAK (113 aa)) is the tRNA-binding domain. A B5 domain is found at 413-489 (AQDFIVELTY…RIYGYNNVEI (77 aa)). Mg(2+) is bound by residues Asp467, Asp473, Glu476, and Asp477. An FDX-ACB domain is found at 727–820 (SKFPAVKRDL…LEDKLGAKLR (94 aa)).

It belongs to the phenylalanyl-tRNA synthetase beta subunit family. Type 1 subfamily. Tetramer of two alpha and two beta subunits. It depends on Mg(2+) as a cofactor.

It localises to the cytoplasm. The enzyme catalyses tRNA(Phe) + L-phenylalanine + ATP = L-phenylalanyl-tRNA(Phe) + AMP + diphosphate + H(+). The protein is Phenylalanine--tRNA ligase beta subunit of Bacteroides fragilis (strain YCH46).